Consider the following 118-residue polypeptide: Large ribosomal subunit protein bL19 (118 aa).

Belongs to the bacterial ribosomal protein bL19 family.

In terms of biological role, this protein is located at the 30S-50S ribosomal subunit interface and may play a role in the structure and function of the aminoacyl-tRNA binding site. The sequence is that of Large ribosomal subunit protein bL19 from Saccharophagus degradans (strain 2-40 / ATCC 43961 / DSM 17024).